The sequence spans 213 residues: V-type ATP synthase subunit D (213 aa).

This sequence belongs to the V-ATPase D subunit family.

Its function is as follows. Produces ATP from ADP in the presence of a proton gradient across the membrane. This Clostridium botulinum (strain Alaska E43 / Type E3) protein is V-type ATP synthase subunit D.